The primary structure comprises 548 residues: MDDRQVQPGRVIVVTGAAGGIGRALVDIFAANGDVVVAVDLPDSGVIELGQNLGEPHLGLEVDVSREDDVVALRALLEKRFSRIEVLVNNAGIGPTMAATADTALEDFQRALAINLVGAYSVACETAKLMKPGAAIVNVASLAGLLGNPKRSAYAASKAGLISITKSLACRWASRGIRVTAVAPGHVRTPMVAELERAGKLDVSAIRRRVPLGRIARPDEIARAVRFLASAQASYITGSTLVVDGGWMSVNQPGGAHQAQDRTPGAEFMRPVEDTDARTVIVMGGATGVGAAIARRFAENGDTVVIADGDGEEAVKLAGLLGDKHLSRRVDRTVETEVVSLFEELRERFGHLDVFVNGMNEILVPNTEESPEVLKRILDVNLTGAFTCVREAAISMRSGSVILNLGASLSLSPLAPSHAYGAYNAGIDMLTRCTAAELGPLGIRTATVAPGYIRTCAANRLAAVAGMDSASLRQRIPLGRVGDAEEVAEAAYFLASFDASYINGSILHVDGGLISSREAGWGSEVDGAISAEMRPQRRPAARWRLLSP.

Short-chain dehydrogenase/reductase stretches follow at residues 1–250 (MDDR…WMSV) and 271–548 (PVED…LLSP). 12 to 37 (IVVTGAAGGIGRALVDIFAANGDVVV) contacts NADP(+). Residue Ser141 participates in substrate binding. The Proton acceptor role is filled by Tyr154. 280-304 (VIVMGGATGVGAAIARRFAENGDTV) provides a ligand contact to NADP(+). Residue Tyr420 is the Proton acceptor of the active site.

This sequence belongs to the short-chain dehydrogenases/reductases (SDR) family.

This is an uncharacterized protein from Sinorhizobium fredii (strain NBRC 101917 / NGR234).